Here is a 412-residue protein sequence, read N- to C-terminus: Serine hydroxymethyltransferase (412 aa).

Residues Leu-120 and Gly-124–Leu-126 contribute to the (6S)-5,6,7,8-tetrahydrofolate site. Lys-228 is subject to N6-(pyridoxal phosphate)lysine. Ser-353 to Phe-355 contributes to the (6S)-5,6,7,8-tetrahydrofolate binding site.

The protein belongs to the SHMT family. In terms of assembly, homodimer. Pyridoxal 5'-phosphate is required as a cofactor.

It is found in the cytoplasm. It catalyses the reaction (6R)-5,10-methylene-5,6,7,8-tetrahydrofolate + glycine + H2O = (6S)-5,6,7,8-tetrahydrofolate + L-serine. It functions in the pathway one-carbon metabolism; tetrahydrofolate interconversion. It participates in amino-acid biosynthesis; glycine biosynthesis; glycine from L-serine: step 1/1. In terms of biological role, catalyzes the reversible interconversion of serine and glycine with tetrahydrofolate (THF) serving as the one-carbon carrier. This reaction serves as the major source of one-carbon groups required for the biosynthesis of purines, thymidylate, methionine, and other important biomolecules. Also exhibits THF-independent aldolase activity toward beta-hydroxyamino acids, producing glycine and aldehydes, via a retro-aldol mechanism. The polypeptide is Serine hydroxymethyltransferase (Lachnoclostridium phytofermentans (strain ATCC 700394 / DSM 18823 / ISDg) (Clostridium phytofermentans)).